We begin with the raw amino-acid sequence, 468 residues long: Tumor necrosis factor receptor superfamily member 10A (468 aa).

An N-terminal signal peptide occupies residues 1–23 (MAPPPARVHLGAFLAVTPNPGSA). The segment at 17 to 82 (TPNPGSAASG…APGPRPAREA (66 aa)) is disordered. Low complexity predominate over residues 20-34 (PGSAASGTEAAAATP). The Extracellular portion of the chain corresponds to 24 to 239 (ASGTEAAAAT…VHKESGNGHN (216 aa)). Arg-52 carries the omega-N-methylarginine modification. Residues 63–74 (GPSARARAGRAP) show a composition bias toward low complexity. TNFR-Cys repeat units follow at residues 107-145 (SAAT…PGAC), 147-188 (RCTE…NTAC), and 189-229 (QCKP…DIEC). 7 disulfides stabilise this stretch: Cys-132–Cys-145, Cys-148–Cys-164, Cys-167–Cys-180, Cys-170–Cys-188, Cys-190–Cys-204, Cys-207–Cys-221, and Cys-211–Cys-229. Asn-156 carries an N-linked (GlcNAc...) asparagine glycan. Residues 240 to 262 (IWVILVVTLVVPLLLVAVLIVCC) form a helical membrane-spanning segment. Over 263–468 (CIGSGCGGDP…DGTGSAVSLE (206 aa)) the chain is Cytoplasmic. Positions 365-448 (MLFFDKFANI…HAREKIQDLL (84 aa)) constitute a Death domain. 3 positions are modified to phosphoserine: Ser-424, Ser-463, and Ser-466.

In terms of assembly, monomer. Homooligomers and heterooligomers with TNFRSF10B. Three TNFRSF10A molecules interact with the TNFSF10 homotrimer. Can interact with TRADD and RIPK1. Interacts with ARAP1. In the absence of stimulation, interacts with BIRC2, DDX3X and GSK3B. The interaction with BIRC2 and DDX3X is further enhanced upon receptor stimulation and accompanied by DDX3X and BIRC2 cleavage. Interacts with ZDHHC3. Interacts with PTPN6; this interaction enables the inhibition of T-cell receptor signaling via LCK. (Microbial infection) Interacts with HCMV protein UL141; this interaction prevents TNFRSF10A cell surface expression. In terms of processing, palmitoylated. Palmitoylation of TNFRSF10A is required for its association with lipid rafts, oligomerization and function in TRAIL-induced cell death. Palmitoylated by ZDHHC3. Widely expressed. High levels are found in spleen, peripheral blood leukocytes, small intestine and thymus, but also in K-562 erythroleukemia cells, MCF-7 breast carcinoma cells and activated T-cells.

The protein localises to the cell membrane. The protein resides in the membrane raft. Its subcellular location is the cytoplasm. It localises to the cytosol. Its function is as follows. Receptor for the cytotoxic ligand TNFSF10/TRAIL. The adapter molecule FADD recruits caspase-8 to the activated receptor. The resulting death-inducing signaling complex (DISC) performs caspase-8 proteolytic activation which initiates the subsequent cascade of caspases (aspartate-specific cysteine proteases) mediating apoptosis. Promotes the activation of NF-kappa-B. The sequence is that of Tumor necrosis factor receptor superfamily member 10A (TNFRSF10A) from Homo sapiens (Human).